Reading from the N-terminus, the 1222-residue chain is ATP-dependent helicase/nuclease subunit A (1222 aa).

Positions 39–495 constitute a UvrD-like helicase ATP-binding domain; that stretch reads QKRTAQQIEA…ILLKENFRSQ (457 aa). Residue 60–67 participates in ATP binding; that stretch reads ASAGSGKT. The UvrD-like helicase C-terminal domain occupies 524-810; it reads QLIAGSHAQT…NLMTIHKSKG (287 aa).

This sequence belongs to the helicase family. AddA subfamily. Heterodimer of AddA and AddB/RexB. It depends on Mg(2+) as a cofactor.

It carries out the reaction Couples ATP hydrolysis with the unwinding of duplex DNA by translocating in the 3'-5' direction.. The catalysed reaction is ATP + H2O = ADP + phosphate + H(+). Its function is as follows. The heterodimer acts as both an ATP-dependent DNA helicase and an ATP-dependent, dual-direction single-stranded exonuclease. Recognizes the chi site generating a DNA molecule suitable for the initiation of homologous recombination. The AddA nuclease domain is required for chi fragment generation; this subunit has the helicase and 3' -&gt; 5' nuclease activities. This is ATP-dependent helicase/nuclease subunit A from Streptococcus pyogenes serotype M12 (strain MGAS9429).